The chain runs to 139 residues: Large ribosomal subunit protein uL16 (139 aa).

Residues 1–20 show a composition bias toward basic residues; sequence MLIPRRVKHRKQHHPKRRGQ. The segment at 1–25 is disordered; that stretch reads MLIPRRVKHRKQHHPKRRGQAKGGT.

This sequence belongs to the universal ribosomal protein uL16 family. As to quaternary structure, part of the 50S ribosomal subunit.

Its function is as follows. Binds 23S rRNA and is also seen to make contacts with the A and possibly P site tRNAs. This Streptomyces avermitilis (strain ATCC 31267 / DSM 46492 / JCM 5070 / NBRC 14893 / NCIMB 12804 / NRRL 8165 / MA-4680) protein is Large ribosomal subunit protein uL16.